Reading from the N-terminus, the 454-residue chain is tRNA modification GTPase MnmE (454 aa).

(6S)-5-formyl-5,6,7,8-tetrahydrofolate is bound by residues Arg23, Glu80, and Lys120. The TrmE-type G domain occupies 216-377 (GMKVVIAGRP…LRNHLKQSMG (162 aa)). Asn226 contacts K(+). GTP-binding positions include 226–231 (NAGKSS), 245–251 (TDIAGTT), 270–273 (DTAG), 335–338 (NKAD), and 358–360 (SAR). Ser230 serves as a coordination point for Mg(2+). 3 residues coordinate K(+): Thr245, Ile247, and Thr250. A Mg(2+)-binding site is contributed by Thr251. Position 454 (Lys454) interacts with (6S)-5-formyl-5,6,7,8-tetrahydrofolate.

This sequence belongs to the TRAFAC class TrmE-Era-EngA-EngB-Septin-like GTPase superfamily. TrmE GTPase family. In terms of assembly, homodimer. Heterotetramer of two MnmE and two MnmG subunits. The cofactor is K(+).

It is found in the cytoplasm. Its function is as follows. Exhibits a very high intrinsic GTPase hydrolysis rate. Involved in the addition of a carboxymethylaminomethyl (cmnm) group at the wobble position (U34) of certain tRNAs, forming tRNA-cmnm(5)s(2)U34. This is tRNA modification GTPase MnmE from Klebsiella pneumoniae (strain 342).